The chain runs to 259 residues: Bisphosphoglycerate mutase (259 aa).

Ser-2 is subject to N-acetylserine. Substrate is bound by residues 10-17 (RHGEGAWN), 23-24 (CS), Arg-62, 89-92 (ERHY), Arg-100, and 116-117 (RR). Residue His-11 is the Tele-phosphohistidine intermediate of the active site. Glu-89 (proton donor/acceptor) is an active-site residue. Thr-122 is modified (phosphothreonine). A substrate-binding site is contributed by 189–190 (GN).

Belongs to the phosphoglycerate mutase family. BPG-dependent PGAM subfamily. In terms of assembly, homodimer. In terms of tissue distribution, expressed in red blood cells.

The catalysed reaction is (2R)-3-phospho-glyceroyl phosphate = (2R)-2,3-bisphosphoglycerate + H(+). It carries out the reaction (2R)-2-phosphoglycerate = (2R)-3-phosphoglycerate. Its activity is regulated as follows. At alkaline pH BPGM favors the synthase reaction; however, at lower pH the phosphatase reaction is dominant. Inhibited by citrate. Its function is as follows. Plays a major role in regulating hemoglobin oxygen affinity by controlling the levels of its allosteric effector 2,3-bisphosphoglycerate (2,3-BPG). Also exhibits mutase (EC 5.4.2.11) activity. This is Bisphosphoglycerate mutase (BPGM) from Oryctolagus cuniculus (Rabbit).